A 323-amino-acid chain; its full sequence is Cuticle collagen 39 (323 aa).

Positions 1-28 (MTGPTCLAVVAGISGVFVFGALFSVAQI) are cleaved as a signal peptide. The segment covering 80–89 (QCNCGPQASN) has biased composition (polar residues). The disordered stretch occupies residues 80-293 (QCNCGPQASN…GAAEQGYRHR (214 aa)). Triple-helical region regions lie at residues 93-125 (GPPGPPGAPGDRGLDGQPGGAGNPGQPGVAGPK), 138-200 (GSPG…GGQR), and 203-265 (GLPG…PGAD). The span at 108–117 (GQPGGAGNPG) shows a compositional bias: gly residues. Residues 136 to 146 (PAGSPGPAGAP) show a composition bias toward low complexity. A compositionally biased stretch (gly residues) spans 159–168 (GHPGQGGSQG). The segment covering 169-191 (PAGPRGPAGDAGAPGQVGAPGNP) has biased composition (low complexity). Positions 224-233 (GQSGGQGQQG) are enriched in gly residues. Residues 234-267 (PAGPAGPDGQPGQPGQDGQAGAPGNDGAPGADAA) are compositionally biased toward low complexity.

This sequence belongs to the cuticular collagen family. As to quaternary structure, collagen polypeptide chains are complexed within the cuticle by disulfide bonds and other types of covalent cross-links.

Functionally, nematode cuticles are composed largely of collagen-like proteins. The cuticle functions both as an exoskeleton and as a barrier to protect the worm from its environment. The sequence is that of Cuticle collagen 39 (col-39) from Caenorhabditis elegans.